The sequence spans 303 residues: Endo-1,3;1,4-beta-D-glucanase (303 aa).

The N-terminal stretch at 1-43 is a signal peptide; the sequence is MPSSAQVLLCLAAVLAAAAATTAEAHSQCLDNPPDRSIHGRQL. N-linked (GlcNAc...) asparagine glycosylation is found at N115, N197, and N257.

In terms of processing, glycosylated.

It localises to the secreted. In terms of biological role, plays a role in control of plant growth. Mediates specific degradation of cell wall (1,3)(1,4)-beta-D-glucans and is related to auxin-mediated growth and development of cereal coleoptiles. This Zea mays (Maize) protein is Endo-1,3;1,4-beta-D-glucanase.